We begin with the raw amino-acid sequence, 579 residues long: F-box protein At5g39450 (579 aa).

Positions 16–62 (TCLLLSLPEDVIAVIARFVSPRDICNLSLCCKSLCDVVDSERIWLVQ) constitute an F-box domain.

The chain is F-box protein At5g39450 from Arabidopsis thaliana (Mouse-ear cress).